Reading from the N-terminus, the 86-residue chain is RNA-binding protein Hfq (86 aa).

The 62-residue stretch at 12-73 folds into the Sm domain; that stretch reads DIFLNQVRKE…ISTITPQKPV (62 aa).

This sequence belongs to the Hfq family. In terms of assembly, homohexamer.

RNA chaperone that binds small regulatory RNA (sRNAs) and mRNAs to facilitate mRNA translational regulation in response to envelope stress, environmental stress and changes in metabolite concentrations. Also binds with high specificity to tRNAs. The chain is RNA-binding protein Hfq from Thermoanaerobacter pseudethanolicus (strain ATCC 33223 / 39E) (Clostridium thermohydrosulfuricum).